A 196-amino-acid polypeptide reads, in one-letter code: MKPQDIVAGKSSLWIFGYGSLVWKPDFKYKRSKVGYIKGYKRRFWHGDNFHRGDDEMPGRVVTLIEEDDVCTWGVAFEVTGSQMEESLKYLNVREAVRGGYLTRAVDFFPRGTNQPPVQALVYIATPDNPIYLGPASTEEIASQIAVCKGNSGHNIEYLLRLAEFMRVSCPDVDDPHLFSIEAALLATIRPILLAA.

15-20 (IFGYGS) contacts substrate. E95 serves as the catalytic Proton acceptor.

This sequence belongs to the gamma-glutamylcyclotransferase family. ChaC subfamily.

It is found in the cytoplasm. The protein localises to the cytosol. Its subcellular location is the golgi apparatus. The protein resides in the trans-Golgi network. The catalysed reaction is glutathione = L-cysteinylglycine + 5-oxo-L-proline. In terms of biological role, catalyzes the cleavage of glutathione into 5-oxo-L-proline and a Cys-Gly dipeptide. Acts specifically on glutathione, but not on other gamma-glutamyl peptides. Glutathione depletion is an important factor for apoptosis initiation and execution. Acts as a pro-apoptotic component of the unfolded protein response pathway by mediating the pro-apoptotic effects of the ATF4-ATF3-DDIT3/CHOP cascade. Negative regulator of Notch signaling pathway involved in embryonic neurogenesis: acts by inhibiting Notch cleavage by furin, maintaining Notch in an immature inactive form, thereby promoting neurogenesis in embryos. The polypeptide is Glutathione-specific gamma-glutamylcyclotransferase 1 (Danio rerio (Zebrafish)).